Reading from the N-terminus, the 326-residue chain is tRNA N6-adenosine threonylcarbamoyltransferase (326 aa).

Residues H113 and H117 each contribute to the Fe cation site. Residues 134–138, D167, G180, and N267 contribute to the substrate site; that span reads VASGG. D291 lines the Fe cation pocket.

It belongs to the KAE1 / TsaD family. Fe(2+) is required as a cofactor.

It localises to the cytoplasm. It catalyses the reaction L-threonylcarbamoyladenylate + adenosine(37) in tRNA = N(6)-L-threonylcarbamoyladenosine(37) in tRNA + AMP + H(+). In terms of biological role, required for the formation of a threonylcarbamoyl group on adenosine at position 37 (t(6)A37) in tRNAs that read codons beginning with adenine. Is involved in the transfer of the threonylcarbamoyl moiety of threonylcarbamoyl-AMP (TC-AMP) to the N6 group of A37, together with TsaE and TsaB. TsaD likely plays a direct catalytic role in this reaction. The polypeptide is tRNA N6-adenosine threonylcarbamoyltransferase (Thermus thermophilus (strain ATCC 27634 / DSM 579 / HB8)).